The sequence spans 526 residues: NAD(P)H-quinone oxidoreductase chain 4 (526 aa).

The next 13 helical transmembrane spans lie at 5–25 (FPWL…VPLI), 32–52 (WYSF…FFTS), 87–107 (LILL…PVTL), 111–131 (MFHF…AVQD), 133–153 (VLFF…LAIW), 165–185 (FILY…AMYF), 211–231 (FLGL…HTWL), 239–259 (TAPV…YALI), 273–293 (FAPL…LTSF), 302–320 (IAYS…VGSL), 331–351 (QMIS…ATYD), 371–393 (IFAM…GFVA), and 414–434 (LVVL…LSML).

This sequence belongs to the complex I subunit 4 family.

It is found in the cell inner membrane. It carries out the reaction a plastoquinone + NADH + (n+1) H(+)(in) = a plastoquinol + NAD(+) + n H(+)(out). It catalyses the reaction a plastoquinone + NADPH + (n+1) H(+)(in) = a plastoquinol + NADP(+) + n H(+)(out). In terms of biological role, NDH-1 shuttles electrons from NAD(P)H, via FMN and iron-sulfur (Fe-S) centers, to quinones in the respiratory chain. The immediate electron acceptor for the enzyme in this species is believed to be plastoquinone. Couples the redox reaction to proton translocation (for every two electrons transferred, four hydrogen ions are translocated across the cytoplasmic membrane), and thus conserves the redox energy in a proton gradient. The chain is NAD(P)H-quinone oxidoreductase chain 4 from Gloeobacter violaceus (strain ATCC 29082 / PCC 7421).